Reading from the N-terminus, the 166-residue chain is Regulatory protein RecX (166 aa).

The protein belongs to the RecX family.

The protein resides in the cytoplasm. Functionally, modulates RecA activity. This is Regulatory protein RecX from Shigella boydii serotype 18 (strain CDC 3083-94 / BS512).